Reading from the N-terminus, the 978-residue chain is Rab3 GTPase-activating protein catalytic subunit (978 aa).

3 disordered regions span residues 533 to 554 (EGKKGNPLYSSSESSVNKTASD), 586 to 621 (HSDTEELKESGQESARKAKEETKENPSPKPEGRLHQ), and 908 to 936 (EEEPKRSSSSDDRRQTSGTDFPSPAGREL). A compositionally biased stretch (polar residues) spans 540-554 (LYSSSESSVNKTASD). Composition is skewed to basic and acidic residues over residues 586-619 (HSDTEELKESGQESARKAKEETKENPSPKPEGRL) and 909-922 (EEPKRSSSSDDRRQ).

Belongs to the Rab3-GAP catalytic subunit family. As to quaternary structure, the Rab3 GTPase-activating complex is a heterodimer composed of rab3gap1 and rab3gap2. The Rab3 GTPase-activating complex interacts with DMXL2. Interacts with LMAN1.

It is found in the cytoplasm. Its subcellular location is the endoplasmic reticulum. It localises to the golgi apparatus. The protein localises to the cis-Golgi network. In terms of biological role, catalytic subunit of the Rab3 GTPase-activating (Rab3GAP) complex composed of rab3gap1 and rab3gap2, which has GTPase-activating protein (GAP) activity towards various Rab3 subfamily members (RAB3A, RAB3B, RAB3C and RAB3D), RAB5A and RAB43, and guanine nucleotide exchange factor (GEF) activity towards RAB18. As part of the Rab3GAP complex, acts as a GAP for Rab3 proteins by converting active RAB3-GTP to the inactive form RAB3-GDP. Rab3 proteins are involved in regulated exocytosis of neurotransmitters and hormones. The Rab3GAP complex, acts as a GEF for RAB18 by promoting the conversion of inactive RAB18-GDP to the active form RAB18-GTP. Recruits and stabilizes RAB18 at the cis-Golgi membrane where RAB18 is most likely activated. Also involved in RAB18 recruitment at the endoplasmic reticulum (ER) membrane where it maintains proper ER structure. Required for normal eye and brain development. May participate in neurodevelopmental processes such as proliferation, migration and differentiation before synapse formation, and non-synaptic vesicular release of neurotransmitters. The sequence is that of Rab3 GTPase-activating protein catalytic subunit (rab3gap1) from Xenopus laevis (African clawed frog).